The chain runs to 339 residues: Serine/threonine-protein kinase pdik1l-B (339 aa).

A Protein kinase domain is found at 8–332 (YDLIREVGRG…LELKLIQIAF (325 aa)). ATP is bound by residues 14–22 (VGRGSYGLV) and Lys37. Asp164 serves as the catalytic Proton acceptor.

Belongs to the protein kinase superfamily. Ser/Thr protein kinase family.

It localises to the nucleus. The catalysed reaction is L-seryl-[protein] + ATP = O-phospho-L-seryl-[protein] + ADP + H(+). The enzyme catalyses L-threonyl-[protein] + ATP = O-phospho-L-threonyl-[protein] + ADP + H(+). This is Serine/threonine-protein kinase pdik1l-B (pdik1-b) from Xenopus laevis (African clawed frog).